The primary structure comprises 322 residues: Myeloid-associated differentiation marker (322 aa).

The span at 1-18 (MPVTVTRTTITTTTTSSS) shows a compositional bias: low complexity. The interval 1 to 21 (MPVTVTRTTITTTTTSSSGLG) is disordered. Ser-22 is modified (phosphoserine). 2 MARVEL domains span residues 31 to 163 (ALTQ…ARPG) and 168 to 319 (YMAT…HLVF). 8 consecutive transmembrane segments (helical) span residues 41-61 (LLQLVSTCVAFSLVASVGAWT), 70-90 (FTWCFCFSVTLIILIVELCGL), 101-121 (FPITFACYAALFCLSASIIYP), 137-157 (AIAATFFSCIACVAYATEVAW), 171-191 (TVPGLLKVLETFVACIIFAFI), 203-223 (LEWCVAVYAICFILAAIAILL), 239-259 (FLSGLALLSVLLYATALVLWP), and 294-314 (LAVAILTAINLLAYVADLVHS).

It belongs to the MAL family. Widely expressed. Not detected in thymus.

It is found in the membrane. The polypeptide is Myeloid-associated differentiation marker (MYADM) (Homo sapiens (Human)).